The sequence spans 411 residues: Serine hydroxymethyltransferase (411 aa).

120–122 lines the (6S)-5,6,7,8-tetrahydrofolate pocket; the sequence is GHL. The residue at position 225 (lysine 225) is an N6-(pyridoxal phosphate)lysine. 350–352 serves as a coordination point for (6S)-5,6,7,8-tetrahydrofolate; the sequence is SPF.

It belongs to the SHMT family. In terms of assembly, homodimer. It depends on pyridoxal 5'-phosphate as a cofactor.

It is found in the cytoplasm. It catalyses the reaction (6R)-5,10-methylene-5,6,7,8-tetrahydrofolate + glycine + H2O = (6S)-5,6,7,8-tetrahydrofolate + L-serine. Its pathway is one-carbon metabolism; tetrahydrofolate interconversion. It functions in the pathway amino-acid biosynthesis; glycine biosynthesis; glycine from L-serine: step 1/1. In terms of biological role, catalyzes the reversible interconversion of serine and glycine with tetrahydrofolate (THF) serving as the one-carbon carrier. This reaction serves as the major source of one-carbon groups required for the biosynthesis of purines, thymidylate, methionine, and other important biomolecules. Also exhibits THF-independent aldolase activity toward beta-hydroxyamino acids, producing glycine and aldehydes, via a retro-aldol mechanism. In Lactobacillus johnsonii (strain CNCM I-12250 / La1 / NCC 533), this protein is Serine hydroxymethyltransferase.